Here is a 428-residue protein sequence, read N- to C-terminus: Histidine--tRNA ligase (428 aa).

It belongs to the class-II aminoacyl-tRNA synthetase family. In terms of assembly, homodimer.

The protein localises to the cytoplasm. It catalyses the reaction tRNA(His) + L-histidine + ATP = L-histidyl-tRNA(His) + AMP + diphosphate + H(+). This Chlamydia trachomatis serovar L2 (strain ATCC VR-902B / DSM 19102 / 434/Bu) protein is Histidine--tRNA ligase.